Consider the following 479-residue polypeptide: Ammonium transporter 3 member 2 (479 aa).

The next 11 membrane-spanning stretches (helical) occupy residues 34–54, 59–79, 139–159, 164–184, 202–222, 237–257, 272–292, 297–317, 321–341, 355–375, and 407–427; these read VAATVVGLQSVPGLVVLYGGV, WAVNSAFMALYAFAAVWICWV, VVYFQCVFAAITLILVAGSLL, FLAWMIFVPLWLTFSYTVGAF, GGYVIHVSAGIAGFTAAYWVG, ILFTLTGAGLLWMGWAGFNGG, NTNICTAMSLIVWTCLDVIFF, VVGAVQGMITGLVCITPAAGV, WAALVMGVLAGSIPWYTMMIL, LGVFHTHGVAGLLGGLLTGLF, and IAGGLFVVAWNVAVTSLICLA.

This sequence belongs to the ammonia transporter channel (TC 1.A.11.2) family.

It localises to the membrane. In terms of biological role, involved in ammonium transport. In Oryza sativa subsp. japonica (Rice), this protein is Ammonium transporter 3 member 2 (AMT3-2).